We begin with the raw amino-acid sequence, 177 residues long: Hypoxanthine phosphoribosyltransferase (177 aa).

Diphosphate is bound by residues Arg43 and Gly44. GMP is bound at residue Glu99. An IMP-binding site is contributed by Glu99. Positions 99 and 100 each coordinate Mg(2+). Asp103 acts as the Proton acceptor in catalysis. GMP is bound by residues 103-108 (DSGKTL), Lys131, and Asp159. IMP is bound by residues 103–108 (DSGKTL) and Lys131. Arg165 contacts diphosphate.

Belongs to the purine/pyrimidine phosphoribosyltransferase family. As to quaternary structure, homotetramer. It depends on Mg(2+) as a cofactor.

It is found in the cytoplasm. It catalyses the reaction IMP + diphosphate = hypoxanthine + 5-phospho-alpha-D-ribose 1-diphosphate. The enzyme catalyses GMP + diphosphate = guanine + 5-phospho-alpha-D-ribose 1-diphosphate. The protein operates within purine metabolism; IMP biosynthesis via salvage pathway; IMP from hypoxanthine: step 1/1. Purine salvage pathway enzyme which catalyzes the transfer of the ribosyl-5-phosphate group from 5-phospho-alpha-D-ribose 1-diphosphate (PRPP) to the N9 position of hypoxanthine to yield IMP (inosine 5'-monophosphate). To a lesser extent, can also act on guanine leading to GMP, but shows a highly less efficient activity with xanthine. The sequence is that of Hypoxanthine phosphoribosyltransferase (hpt) from Buchnera aphidicola subsp. Schizaphis graminum (strain Sg).